Reading from the N-terminus, the 194-residue chain is Peptidyl-tRNA hydrolase (194 aa).

Tyr17 is a tRNA binding site. His22 (proton acceptor) is an active-site residue. Positions 68, 70, and 116 each coordinate tRNA.

Belongs to the PTH family. Monomer.

It localises to the cytoplasm. The catalysed reaction is an N-acyl-L-alpha-aminoacyl-tRNA + H2O = an N-acyl-L-amino acid + a tRNA + H(+). Functionally, hydrolyzes ribosome-free peptidyl-tRNAs (with 1 or more amino acids incorporated), which drop off the ribosome during protein synthesis, or as a result of ribosome stalling. Its function is as follows. Catalyzes the release of premature peptidyl moieties from peptidyl-tRNA molecules trapped in stalled 50S ribosomal subunits, and thus maintains levels of free tRNAs and 50S ribosomes. The chain is Peptidyl-tRNA hydrolase from Mannheimia succiniciproducens (strain KCTC 0769BP / MBEL55E).